Consider the following 423-residue polypeptide: Deferrochelatase (423 aa).

A signal peptide (tat-type signal) is located at residues 1 to 35; it reads MQYKDENGVNEPSRRRLLKVIGALALAGSCPVAHA. Heme b is bound at residue 236 to 238; that stretch reads GTA. Residues 236 to 238 and R296 contribute to the protoporphyrin IX site; that span reads GTA. Heme b-binding positions include H329, 334–336, and R347; that span reads NPR.

As to quaternary structure, homodimer. Part of a ferrous iron transporter composed of EfeU, EfeO and EfeB. However, this EfeUOB tripartite iron transporter is defective in E.coli strain K12 due to a frameshift mutation in EfeU. The cofactor is heme b. In terms of processing, exported by the Tat system. The position of the signal peptide cleavage has been experimentally proven. Can also be exported by the Sec system.

Its subcellular location is the periplasm. It catalyses the reaction heme b + 2 H(+) = protoporphyrin IX + Fe(2+). In terms of biological role, involved in the recovery of exogenous heme iron. Extracts iron from heme while preserving the protoporphyrin ring intact. Also displays peroxidase activity on guaiacol in vitro. The polypeptide is Deferrochelatase (efeB) (Escherichia coli (strain K12)).